Consider the following 98-residue polypeptide: Small ribosomal subunit protein bS6 (98 aa).

The protein belongs to the bacterial ribosomal protein bS6 family.

Functionally, binds together with bS18 to 16S ribosomal RNA. The chain is Small ribosomal subunit protein bS6 from Staphylococcus epidermidis (strain ATCC 35984 / DSM 28319 / BCRC 17069 / CCUG 31568 / BM 3577 / RP62A).